Consider the following 329-residue polypeptide: MMRSFVSLISLLLLLSFSSSVLSTKKSSFQKLPVPGNRTGPEAFAFDSTGKGFYTGVTGGKILKYLPKKGYVDFAQITNSSKSSLCDGALGTTNVEKCGRPAGIAFNTKTGDLYVADAALGLHVIPRRGGLAKKIADSVGGKPFLFLDGLDVDPTTGVVYFTSFSSTFGPRDVLKAVATKDSTGKFFKYDPSKKVVTVLMEGLSGSAGCAVSSDGSFVLVGQFTKSNIKRYWIKGSKAGTSEDFTNSVSNPDNIKRIGSTGNFWVASVVNSATGPTNPSAVKVSSAGKVLQTIPLKDKFGDTLVSEVNEYKGQLYIGALFGPFAGILKL.

Residues 1-23 (MMRSFVSLISLLLLLSFSSSVLS) form the signal peptide. N-linked (GlcNAc...) asparagine glycosylation is found at N37 and N79.

Belongs to the strictosidine synthase family.

Its subcellular location is the vacuole. It carries out the reaction 3alpha(S)-strictosidine + H2O = secologanin + tryptamine. It participates in alkaloid biosynthesis; 3alpha(S)-strictosidine biosynthesis; 3alpha(S)-strictosidine from secologanin and tryptamine: step 1/1. Its function is as follows. Catalyzes the stereospecific condensation of tryptamine with secologanin to form strictosidine, the key intermediate of indole alkaloid biosynthesis. The polypeptide is Protein STRICTOSIDINE SYNTHASE-LIKE 11 (Arabidopsis thaliana (Mouse-ear cress)).